The chain runs to 107 residues: Nucleoid-associated protein mlr5504 (107 aa).

Belongs to the YbaB/EbfC family. Homodimer.

The protein resides in the cytoplasm. It is found in the nucleoid. Binds to DNA and alters its conformation. May be involved in regulation of gene expression, nucleoid organization and DNA protection. In Mesorhizobium japonicum (strain LMG 29417 / CECT 9101 / MAFF 303099) (Mesorhizobium loti (strain MAFF 303099)), this protein is Nucleoid-associated protein mlr5504.